The sequence spans 214 residues: Glycerol-3-phosphate acyltransferase (214 aa).

A run of 5 helical transmembrane segments spans residues 8 to 28 (LILA…QIFF), 70 to 90 (LLPL…LIAV), 111 to 131 (AGVV…IFIV), 144 to 164 (IVVA…GIIL), and 165 to 185 (PSYD…ILIR).

The protein belongs to the PlsY family. As to quaternary structure, probably interacts with PlsX.

It localises to the cell membrane. The enzyme catalyses an acyl phosphate + sn-glycerol 3-phosphate = a 1-acyl-sn-glycero-3-phosphate + phosphate. The protein operates within lipid metabolism; phospholipid metabolism. Functionally, catalyzes the transfer of an acyl group from acyl-phosphate (acyl-PO(4)) to glycerol-3-phosphate (G3P) to form lysophosphatidic acid (LPA). This enzyme utilizes acyl-phosphate as fatty acyl donor, but not acyl-CoA or acyl-ACP. This is Glycerol-3-phosphate acyltransferase from Streptococcus gordonii (strain Challis / ATCC 35105 / BCRC 15272 / CH1 / DL1 / V288).